The chain runs to 520 residues: Anthranilate synthase component 1 (520 aa).

L-tryptophan contacts are provided by residues Ser40, Lys50, and 291–293 (PYM). 328–329 (GT) serves as a coordination point for chorismate. Glu361 serves as a coordination point for Mg(2+). Residues Tyr449, Arg469, 483-485 (GAG), and Gly485 each bind chorismate. Residue Glu498 coordinates Mg(2+).

It belongs to the anthranilate synthase component I family. As to quaternary structure, homodimer. In fact, exists in a monomer-dimer equilibrium in solution, shifted spontaneously in favor of the dimer; the monomer has a reduced activity compared with the dimer. Heterotetramer consisting of two non-identical subunits: a beta subunit (TrpG) and a large alpha subunit (TrpE) (Potential). Requires Mg(2+) as cofactor.

The enzyme catalyses chorismate + L-glutamine = anthranilate + pyruvate + L-glutamate + H(+). The protein operates within amino-acid biosynthesis; L-tryptophan biosynthesis; L-tryptophan from chorismate: step 1/5. With respect to regulation, cooperatively feedback inhibited by tryptophan. Part of a heterotetrameric complex that catalyzes the two-step biosynthesis of anthranilate, an intermediate in the biosynthesis of L-tryptophan. In the first step, the glutamine-binding beta subunit (TrpG) of anthranilate synthase (AS) provides the glutamine amidotransferase activity which generates ammonia as a substrate that, along with chorismate, is used in the second step, catalyzed by the large alpha subunit of AS (TrpE) to produce anthranilate. In the absence of TrpG, TrpE can synthesize anthranilate directly from chorismate and high concentrations of ammonia. In Salmonella typhimurium (strain LT2 / SGSC1412 / ATCC 700720), this protein is Anthranilate synthase component 1 (trpE).